Here is a 217-residue protein sequence, read N- to C-terminus: Adenylate kinase (217 aa).

10–15 (GAGKGT) is an ATP binding site. The NMP stretch occupies residues 30–59 (STGDIFRAAMKNETPMGIEAKKYIDKGELV). AMP-binding positions include threonine 31, arginine 36, 57–59 (ELV), 85–88 (GFPR), and glutamine 92. The tract at residues 126–164 (GRFICRNCGATYHKLYNAPKVEGTCDVCGHHEFYQRDDD) is LID. Arginine 127 contributes to the ATP binding site. Positions 130 and 133 each coordinate Zn(2+). ATP is bound at residue 136–137 (TY). Residues cysteine 150 and cysteine 153 each coordinate Zn(2+). The AMP site is built by arginine 161 and arginine 172. Glutamine 200 contributes to the ATP binding site.

It belongs to the adenylate kinase family. As to quaternary structure, monomer.

The protein resides in the cytoplasm. It carries out the reaction AMP + ATP = 2 ADP. It functions in the pathway purine metabolism; AMP biosynthesis via salvage pathway; AMP from ADP: step 1/1. In terms of biological role, catalyzes the reversible transfer of the terminal phosphate group between ATP and AMP. Plays an important role in cellular energy homeostasis and in adenine nucleotide metabolism. The protein is Adenylate kinase of Limosilactobacillus reuteri subsp. reuteri (strain JCM 1112) (Lactobacillus reuteri).